The primary structure comprises 456 residues: Probable serine/threonine-protein kinase DDB_G0277449 (456 aa).

A compositionally biased stretch (low complexity) spans 50–83; it reads STSPTECEESSSSTITTPSEESLSSGEESSSISD. Positions 50–84 are disordered; sequence STSPTECEESSSSTITTPSEESLSSGEESSSISDS. The Protein kinase domain occupies 128–383; sequence FIIKHLVGKG…AIEIKRHPFF (256 aa). ATP contacts are provided by residues 134–142 and Lys-157; that span reads VGKGGFGKV. Residue Asp-251 is the Proton acceptor of the active site. The AGC-kinase C-terminal domain occupies 384–455; the sequence is KSIQWRKIEN…VRTPVLLESQ (72 aa).

The protein belongs to the protein kinase superfamily. AGC Ser/Thr protein kinase family.

The enzyme catalyses L-seryl-[protein] + ATP = O-phospho-L-seryl-[protein] + ADP + H(+). It carries out the reaction L-threonyl-[protein] + ATP = O-phospho-L-threonyl-[protein] + ADP + H(+). The sequence is that of Probable serine/threonine-protein kinase DDB_G0277449 from Dictyostelium discoideum (Social amoeba).